Here is a 149-residue protein sequence, read N- to C-terminus: uncharacterized protein (149 aa).

The chain crosses the membrane as a helical span at residues 12-31 (FKNLVIGAVSGVAAAYFLST).

The protein resides in the membrane. This is an uncharacterized protein from Streptococcus pyogenes serotype M6 (strain ATCC BAA-946 / MGAS10394).